A 518-amino-acid polypeptide reads, in one-letter code: MEGFSCSLQPPTASEREDCNRDEPPRKIITEKNTLRQTKLANGTSSMIVPKQRKLSANYEKEKELCVKYFEQWSECDQVEFVEHLISRMCHYQHGHINTYLKPMLQRDFITALPARGLDHIAENILSYLDAKSLCSAELVCKEWYRVTSDGMLWKKLIERMVRTDSLWRGLAERRGWGQYLFKNKPPDGKTPPNSFYRALYPKIIQDIETIESNWRCGRHSLQRIHCRSETSKGVYCLQYDDQKIVSGLRDNTIKIWDKNTLECKRVLMGHTGSVLCLQYDERVIITGSSDSTVRVWDVNTGEMLNTLIHHCEAVLHLRFNNGMMVTCSKDRSIAVWDMASATDITLRRVLVGHRAAVNVVDFDDKYIVSASGDRTIKVWNTSTCEFVRTLNGHKRGIACLQYRDRLVVSGSSDNTIRLWDIECGACLRVLEGHEELVRCIRFDNKRIVSGAYDGKIKVWDLVAALDPRAPAGTLCLRTLVEHSGRVFRLQFDEFQIVSSSHDDTILIWDFLNDPGLA.

Residues 1–12 (MEGFSCSLQPPT) show a composition bias toward polar residues. Residues 1-24 (MEGFSCSLQPPTASEREDCNRDEP) form a disordered region. Over residues 14–24 (SEREDCNRDEP) the composition is skewed to basic and acidic residues. Residues 119–157 (DHIAENILSYLDAKSLCSAELVCKEWYRVTSDGMLWKKL) form the F-box domain. 7 WD repeats span residues 230–258 (ETSK…KIWD), 270–298 (GHTG…RVWD), 310–338 (HHCE…AVWD), 353–381 (GHRA…KVWN), 393–421 (GHKR…RLWD), 433–461 (GHEE…KVWD), and 482–510 (EHSG…LIWD).

In terms of assembly, part of a SCF (SKP1-cullin-F-box) ubiquitin-protein ligase complex. Interacts with fbxo5.

Its function is as follows. Substrate recognition component of a SCF (SKP1-CUL1-F-box protein) E3 ubiquitin-protein ligase complex which mediates the ubiquitination and subsequent proteasomal degradation of target proteins. Probably recognizes and binds to phosphorylated target proteins. May participate in Wnt signaling. The protein is Beta-TrCP (fbxw1) of Xenopus laevis (African clawed frog).